The following is a 652-amino-acid chain: Probable L-type lectin-domain containing receptor kinase S.5 (652 aa).

The signal sequence occupies residues 1–20 (MRFSLAWKLLFLILTCKIET). The Extracellular portion of the chain corresponds to 21 to 266 (QVKCLKFDFP…EGLKIDGDGN (246 aa)). Residues 24-257 (CLKFDFPGFN…LNCVRSWSFE (234 aa)) are legume-lectin like. Asparagine 33, asparagine 91, asparagine 97, asparagine 100, asparagine 122, asparagine 139, asparagine 201, and asparagine 244 each carry an N-linked (GlcNAc...) asparagine glycan. A helical membrane pass occupies residues 267-287 (MLWLWITIPIVFIVGIGAFLG). The Cytoplasmic segment spans residues 288-652 (ALYLRSRSKA…INSLTELTGR (365 aa)). A Protein kinase domain is found at 330 to 622 (FGAENKLGQG…PDVPTERPAF (293 aa)). Residues 336-344 (LGQGGFGMV) and lysine 357 contribute to the ATP site. Aspartate 455 functions as the Proton acceptor in the catalytic mechanism.

In the C-terminal section; belongs to the protein kinase superfamily. Ser/Thr protein kinase family. It in the N-terminal section; belongs to the leguminous lectin family.

The protein localises to the cell membrane. It catalyses the reaction L-seryl-[protein] + ATP = O-phospho-L-seryl-[protein] + ADP + H(+). The enzyme catalyses L-threonyl-[protein] + ATP = O-phospho-L-threonyl-[protein] + ADP + H(+). This Arabidopsis thaliana (Mouse-ear cress) protein is Probable L-type lectin-domain containing receptor kinase S.5 (LECRKS5).